Here is a 986-residue protein sequence, read N- to C-terminus: Bone morphogenetic protein 1 (986 aa).

The N-terminal stretch at 1–22 is a signal peptide; it reads MPGVARLPLLLGLLLLPRPGRP. A propeptide spanning residues 23–120 is cleaved from the precursor; that stretch reads LDLADYTYDL…RWRGRSRSRR (98 aa). Residues 83-125 form a disordered region; the sequence is SIKAAVPGNTSTPSCQSTNGQPQRGACGRWRGRSRSRRAATSR. Positions 90–104 are enriched in polar residues; the sequence is GNTSTPSCQSTNGQP. N91 carries an N-linked (GlcNAc...) asparagine glycan. The segment covering 112–122 has biased composition (basic residues); the sequence is WRGRSRSRRAA. Residues 121 to 320 enclose the Peptidase M12A domain; it reads AATSRPERVW…AQARKLYKCP (200 aa). N142 carries an N-linked (GlcNAc...) asparagine glycan. 4 cysteine pairs are disulfide-bonded: C163/C319, C183/C205, C185/C186, and C322/C348. Residue H213 coordinates Zn(2+). Residue E214 is part of the active site. Residues H217 and H223 each contribute to the Zn(2+) site. 2 CUB domains span residues 322–434 and 435–546; these read CGET…YEAI and CGGD…NFFK. 2 N-linked (GlcNAc...) asparagine glycosylation sites follow: N332 and N363. Disulfide bonds link C375–C397, C435–C461, C488–C510, C551–C563, C559–C572, C574–C587, C591–C617, C644–C666, C707–C718, C714–C727, C729–C742, C747–C773, C800–C822, C860–C890, and C917–C939. One can recognise an EGF-like 1; calcium-binding domain in the interval 547–588; that stretch reads EVDECSRPNRGGCEQRCLNTLGSYKCSCDPGYELAPDKRRCE. A CUB 3 domain is found at 591 to 703; that stretch reads CGGFLTKLNG…KGFKAHFFSD (113 aa). N-linked (GlcNAc...) asparagine glycosylation occurs at N599. In terms of domain architecture, EGF-like 2; calcium-binding spans 704–743; the sequence is KDECSKDNGGCQQDCVNTFGSYECQCRSGFVLHDNKHDCK. CUB domains follow at residues 747–859 and 860–976; these read CDHK…HATE and CGGQ…YTST. 2 positions are modified to omega-N-methylarginine: R934 and R937.

In terms of assembly, interacts with POSTN, the interaction promotes deposition on the extracellular matrix. The cofactor is Zn(2+). Proteolytically activated in the trans-Golgi network by furin-like/paired basic proprotein convertases, cleavage is not required for secretion. Ubiquitous.

The protein resides in the golgi apparatus. It is found in the trans-Golgi network. Its subcellular location is the secreted. It localises to the extracellular space. The protein localises to the extracellular matrix. It catalyses the reaction Cleavage of the C-terminal propeptide at Ala-|-Asp in type I and II procollagens and at Arg-|-Asp in type III.. Activity is increased by the procollagen C-endopeptidase enhancer protein. Functionally, metalloprotease that plays key roles in regulating the formation of the extracellular matrix (ECM) via processing of various precursor proteins into mature functional enzymes or structural proteins. Thereby participates in several developmental and physiological processes such as cartilage and bone formation, muscle growth and homeostasis, wound healing and tissue repair. Roles in ECM formation include cleavage of the C-terminal propeptides from procollagens such as procollagen I, II and III or the proteolytic activation of the enzyme lysyl oxidase LOX, necessary to formation of covalent cross-links in collagen and elastic fibers. Additional substrates include matricellular thrombospondin-1/THBS1 whose cleavage leads to cell adhesion disruption and TGF-beta activation. In terms of biological role, plays an important role in bone repair by acting as a coactivator of BMP7. The sequence is that of Bone morphogenetic protein 1 (BMP1) from Homo sapiens (Human).